We begin with the raw amino-acid sequence, 73 residues long: Translation initiation factor IF-1 (73 aa).

An S1-like domain is found at 1-73 (MAKKEDTIVL…TKARVVYRHR (73 aa)).

This sequence belongs to the IF-1 family. In terms of assembly, component of the 30S ribosomal translation pre-initiation complex which assembles on the 30S ribosome in the order IF-2 and IF-3, IF-1 and N-formylmethionyl-tRNA(fMet); mRNA recruitment can occur at any time during PIC assembly.

It localises to the cytoplasm. One of the essential components for the initiation of protein synthesis. Stabilizes the binding of IF-2 and IF-3 on the 30S subunit to which N-formylmethionyl-tRNA(fMet) subsequently binds. Helps modulate mRNA selection, yielding the 30S pre-initiation complex (PIC). Upon addition of the 50S ribosomal subunit IF-1, IF-2 and IF-3 are released leaving the mature 70S translation initiation complex. This is Translation initiation factor IF-1 from Chlamydia muridarum (strain MoPn / Nigg).